We begin with the raw amino-acid sequence, 415 residues long: Serine hydroxymethyltransferase (415 aa).

(6S)-5,6,7,8-tetrahydrofolate is bound by residues leucine 117 and 121–123 (GHL). Lysine 226 carries the post-translational modification N6-(pyridoxal phosphate)lysine. (6S)-5,6,7,8-tetrahydrofolate contacts are provided by residues glutamate 241 and 349-351 (SPF).

This sequence belongs to the SHMT family. Homodimer. It depends on pyridoxal 5'-phosphate as a cofactor.

It localises to the cytoplasm. It catalyses the reaction (6R)-5,10-methylene-5,6,7,8-tetrahydrofolate + glycine + H2O = (6S)-5,6,7,8-tetrahydrofolate + L-serine. The protein operates within one-carbon metabolism; tetrahydrofolate interconversion. It participates in amino-acid biosynthesis; glycine biosynthesis; glycine from L-serine: step 1/1. Functionally, catalyzes the reversible interconversion of serine and glycine with tetrahydrofolate (THF) serving as the one-carbon carrier. This reaction serves as the major source of one-carbon groups required for the biosynthesis of purines, thymidylate, methionine, and other important biomolecules. Also exhibits THF-independent aldolase activity toward beta-hydroxyamino acids, producing glycine and aldehydes, via a retro-aldol mechanism. The polypeptide is Serine hydroxymethyltransferase (Geotalea daltonii (strain DSM 22248 / JCM 15807 / FRC-32) (Geobacter daltonii)).